Here is a 1090-residue protein sequence, read N- to C-terminus: Nitrogen assimilation transcription factor nit-4 (1090 aa).

The segment covering 1–14 (MNSSDVQMMSSQDA) has biased composition (polar residues). The tract at residues 1 to 43 (MNSSDVQMMSSQDAPGSAGLAPDNIASSLPSKKKSRRGADPTN) is disordered. The zn(2)-C6 fungal-type DNA-binding region spans 53-81 (CIACRRRKSKCDGALPSCAACASVYGTEC). Disordered regions lie at residues 145 to 176 (RRDE…SQAV), 666 to 689 (FSTS…PAPP), 773 to 798 (HQHH…YQQQ), 825 to 875 (GIPT…VKPP), 936 to 999 (QGWD…QRQQ), and 1033 to 1053 (HGAE…TTVG). Over residues 167 to 176 (GRDDATSQAV) the composition is skewed to basic and acidic residues. A compositionally biased stretch (polar residues) spans 666–677 (FSTSEVPSPNRT). The segment covering 849–859 (QPQQQQQPQAQ) has biased composition (low complexity). 2 stretches are compositionally biased toward gly residues: residues 940 to 965 (LEGG…GGAG) and 976 to 988 (NIGG…GGST). Low complexity predominate over residues 990 to 999 (QRQQQQQRQQ).

It is found in the nucleus. Pathway-specific regulatory gene of nitrate assimilation; it activates the transcription of the genes for nitrate and nitrite reductases. The chain is Nitrogen assimilation transcription factor nit-4 (nit-4) from Neurospora crassa (strain ATCC 24698 / 74-OR23-1A / CBS 708.71 / DSM 1257 / FGSC 987).